We begin with the raw amino-acid sequence, 139 residues long: Putative lipoprotein MIP_01412 (139 aa).

An N-terminal signal peptide occupies residues 1–19; it reads MRNRTVAAGAVLTAALLGA. Cys20 carries the N-palmitoyl cysteine lipid modification. The S-diacylglycerol cysteine moiety is linked to residue Cys20.

Belongs to the mycobacterial 19 kDa antigen family.

The protein localises to the cell membrane. The chain is Putative lipoprotein MIP_01412 from Mycobacterium indicus pranii (strain DSM 45239 / MTCC 9506).